The following is a 169-amino-acid chain: Putative phosphoesterase SERP0604 (169 aa).

The active-site Proton donor is the H34. 2 consecutive short sequence motifs (HXTX) follow at residues 34–37 (HITI) and 115–118 (HFTI). The Proton acceptor role is filled by H115.

It belongs to the 2H phosphoesterase superfamily. YjcG family.

In Staphylococcus epidermidis (strain ATCC 35984 / DSM 28319 / BCRC 17069 / CCUG 31568 / BM 3577 / RP62A), this protein is Putative phosphoesterase SERP0604.